A 326-amino-acid chain; its full sequence is Protein FAM50 homolog (326 aa).

Residues 76–112 (EISNRDLQVARGASSSTSLAKDSQEAREKEEHVAKHT) are disordered. Positions 97-109 (DSQEAREKEEHVA) are enriched in basic and acidic residues.

Belongs to the FAM50 family.

This Caenorhabditis briggsae protein is Protein FAM50 homolog.